The following is a 567-amino-acid chain: Oxygen-dependent choline dehydrogenase (567 aa).

An FAD-binding site is contributed by 6–35 (DYIIVGAGSAGNTLATRLTEDEGVTVLLLE). The interval 182–203 (QQEGFGPMDRTVTPKGRRASTA) is disordered. Catalysis depends on His475, which acts as the Proton acceptor.

This sequence belongs to the GMC oxidoreductase family. The cofactor is FAD.

It carries out the reaction choline + A = betaine aldehyde + AH2. It catalyses the reaction betaine aldehyde + NAD(+) + H2O = glycine betaine + NADH + 2 H(+). It participates in amine and polyamine biosynthesis; betaine biosynthesis via choline pathway; betaine aldehyde from choline (cytochrome c reductase route): step 1/1. Involved in the biosynthesis of the osmoprotectant glycine betaine. Catalyzes the oxidation of choline to betaine aldehyde and betaine aldehyde to glycine betaine at the same rate. This Pseudomonas fluorescens (strain ATCC BAA-477 / NRRL B-23932 / Pf-5) protein is Oxygen-dependent choline dehydrogenase.